Reading from the N-terminus, the 1296-residue chain is Phosphoribosylformylglycinamidine synthase (1296 aa).

The interval 304-323 (WPGAATGSGGEIRDEGATGR) is disordered. ATP is bound by residues 306 to 317 (GAATGSGGEIRD) and A677. 4 residues coordinate Mg(2+): D678, E717, N721, and D885. S887 contributes to the ATP binding site. Basic and acidic residues predominate over residues 1000–1013 (PDCADQEHQAKQDE). The interval 1000–1019 (PDCADQEHQAKQDESDPGLN) is disordered. The Glutamine amidotransferase type-1 domain maps to 1043–1296 (VAVLREQGVN…MFRNARKQLG (254 aa)). Residue C1136 is the Nucleophile of the active site. Residues H1261 and E1263 contribute to the active site.

The protein in the N-terminal section; belongs to the FGAMS family. As to quaternary structure, monomer.

The protein resides in the cytoplasm. The catalysed reaction is N(2)-formyl-N(1)-(5-phospho-beta-D-ribosyl)glycinamide + L-glutamine + ATP + H2O = 2-formamido-N(1)-(5-O-phospho-beta-D-ribosyl)acetamidine + L-glutamate + ADP + phosphate + H(+). Its pathway is purine metabolism; IMP biosynthesis via de novo pathway; 5-amino-1-(5-phospho-D-ribosyl)imidazole from N(2)-formyl-N(1)-(5-phospho-D-ribosyl)glycinamide: step 1/2. In terms of biological role, phosphoribosylformylglycinamidine synthase involved in the purines biosynthetic pathway. Catalyzes the ATP-dependent conversion of formylglycinamide ribonucleotide (FGAR) and glutamine to yield formylglycinamidine ribonucleotide (FGAM) and glutamate. This chain is Phosphoribosylformylglycinamidine synthase, found in Yersinia pestis bv. Antiqua (strain Nepal516).